The chain runs to 195 residues: Imidazoleglycerol-phosphate dehydratase (195 aa).

This sequence belongs to the imidazoleglycerol-phosphate dehydratase family.

It is found in the cytoplasm. The catalysed reaction is D-erythro-1-(imidazol-4-yl)glycerol 3-phosphate = 3-(imidazol-4-yl)-2-oxopropyl phosphate + H2O. Its pathway is amino-acid biosynthesis; L-histidine biosynthesis; L-histidine from 5-phospho-alpha-D-ribose 1-diphosphate: step 6/9. The sequence is that of Imidazoleglycerol-phosphate dehydratase from Clostridium botulinum (strain Alaska E43 / Type E3).